The sequence spans 394 residues: Venom metalloproteinase antarease-like TtrivMP_A (394 aa).

The signal sequence occupies residues 1–16 (MISYLASIFLLATVSA). A propeptide spanning residues 17 to 158 (VPSGRVEVVF…AENVSRMAEE (142 aa)) is cleaved from the precursor. A glycan (N-linked (GlcNAc...) asparagine) is linked at asparagine 151. The Peptidase M12B domain occupies 162 to 390 (IVVEYYIVTD…KPTAFCIFEQ (229 aa)). A disulfide bond links cysteine 295 and cysteine 386. Histidine 319 contacts Zn(2+). Residue glutamate 320 is part of the active site. Zn(2+) is bound by residues histidine 323 and histidine 329.

It belongs to the venom metalloproteinase (M12B) family. The cofactor is Zn(2+). Expressed by the venom gland.

Its subcellular location is the secreted. Its activity is regulated as follows. Inhibited by EDTA. Acts as a metalloprotease. Penetrates intact tissue and specifically cleaves the vesicle-associated membrane protein 2 (VAMP2) (part of the SNARE complex) involved in pancreatic secretion, thus disrupting the normal vesicular traffic. This chain is Venom metalloproteinase antarease-like TtrivMP_A, found in Tityus trivittatus (Argentinean scorpion).